The chain runs to 139 residues: ATP synthase epsilon chain (139 aa).

Belongs to the ATPase epsilon chain family. F-type ATPases have 2 components, CF(1) - the catalytic core - and CF(0) - the membrane proton channel. CF(1) has five subunits: alpha(3), beta(3), gamma(1), delta(1), epsilon(1). CF(0) has three main subunits: a, b and c.

It is found in the cell inner membrane. In terms of biological role, produces ATP from ADP in the presence of a proton gradient across the membrane. The polypeptide is ATP synthase epsilon chain (Escherichia coli O139:H28 (strain E24377A / ETEC)).